We begin with the raw amino-acid sequence, 180 residues long: Segregation and condensation protein B (180 aa).

The protein belongs to the ScpB family. In terms of assembly, homodimer. Homodimerization may be required to stabilize the binding of ScpA to the Smc head domains. Component of a cohesin-like complex composed of ScpA, ScpB and the Smc homodimer, in which ScpA and ScpB bind to the head domain of Smc. The presence of the three proteins is required for the association of the complex with DNA.

It localises to the cytoplasm. Its function is as follows. Participates in chromosomal partition during cell division. May act via the formation of a condensin-like complex containing Smc and ScpA that pull DNA away from mid-cell into both cell halves. This is Segregation and condensation protein B from Staphylococcus aureus (strain USA300).